An 817-amino-acid polypeptide reads, in one-letter code: MRRRNLIITSDSDSDDGGGGGGAATASTPASASASASFPSVSGGGCGDGWPSPQNPRSVPVQFPSPSSPPPSPPIEISDEEEAEAEVVVEEEEVVVVEDEEEEYEEVEEIEDPDGDSPFVDAPEHISPPPPPPPPARTPMPTPTPTPTPTPTRPPVPVWAAPLPARTPTPTPSAPPRAAAPSPAGTPSPSPIPPSSTPVSALSGPLRQVDEFLRGLGLRLRPEWLESCAAGVPGFYGLGGVEAMARRCFEQFLFADMNACGAGVLPEGVGSMHNAVLDGPLVLQVDEIVNLSAPLRERYRDAHAGPKRCLKLSMTDGIQRIYGMEYRPIKDLEVLAPAGFKIVIRNVHIRRGLFMLVPEVIEILGGVDDELDEARNRLVSEVNKPPRGKRKQGGLPLSSRATLAAWPTNANATNDAEQGASVPRTVNTPHPTRLGNASHASQVGRTTQPMVDNLIPHVVVSNAQEQSRHIQEITMQGQPTSLNRHNKEASASYRYNAQCSISGTTRAMADEHVLVSNAQEQSPHIQEITMQDQSTSLNGRNKEASASTSYRYNAQCSISGTTRAMADERVDPSFVGNNVHEQMQRVQGITMQDHISASSESKRELSVTTPSGYDSRLAPHGVGNTGTRSGEATRSSNVDDGINNIGHPISLCGENEKPFTYIFNMLADWGVQQDTVPYIQGKIKGLITSVKRFQYKQSMQYDLYVYIDDGSFITEAFVDRDIVQNMIGLSAEELAAALSSGGPAQANIRKTMKAFEHFLVNFEGTILIELNRDSSVPIVREMNKGCSSSDAWQLLRRVKTFSGQGYMRSLDFMDTTP.

Disordered stretches follow at residues 1–203 (MRRR…SALS) and 595–639 (ISAS…SNVD). The segment covering 24–41 (ATASTPASASASASFPSV) has biased composition (low complexity). A compositionally biased stretch (acidic residues) spans 77-115 (ISDEEEAEAEVVVEEEEVVVVEDEEEEYEEVEEIEDPDG). Composition is skewed to pro residues over residues 126-157 (ISPPPPPPPPARTPMPTPTPTPTPTPTRPPVP), 165-175 (ARTPTPTPSAP), and 184-196 (AGTPSPSPIPPSS). Residues 625–638 (TGTRSGEATRSSNV) are compositionally biased toward polar residues.

The protein belongs to the RMI1 family. As to quaternary structure, component of the RMI complex, containing at least TOP3A and RMI1.

Its function is as follows. Essential component of the RMI complex, a complex that plays an important role in the resolution step of homologous recombination, in a process called Holliday Junction dissolution, to limit DNA crossover formation in cells. In Oryza sativa subsp. japonica (Rice), this protein is RecQ-mediated genome instability protein 1 (RMI1).